Consider the following 147-residue polypeptide: Cyanate hydratase (147 aa).

Residues R88, E91, and S114 contribute to the active site.

The protein belongs to the cyanase family.

It catalyses the reaction cyanate + hydrogencarbonate + 3 H(+) = NH4(+) + 2 CO2. Its function is as follows. Catalyzes the reaction of cyanate with bicarbonate to produce ammonia and carbon dioxide. In Thiobacillus denitrificans (strain ATCC 25259 / T1), this protein is Cyanate hydratase.